The following is a 418-amino-acid chain: Glutamate-1-semialdehyde 2,1-aminomutase (418 aa).

K262 is subject to N6-(pyridoxal phosphate)lysine.

It belongs to the class-III pyridoxal-phosphate-dependent aminotransferase family. HemL subfamily. It depends on pyridoxal 5'-phosphate as a cofactor.

The protein resides in the cytoplasm. It carries out the reaction (S)-4-amino-5-oxopentanoate = 5-aminolevulinate. It functions in the pathway porphyrin-containing compound metabolism; protoporphyrin-IX biosynthesis; 5-aminolevulinate from L-glutamyl-tRNA(Glu): step 2/2. The polypeptide is Glutamate-1-semialdehyde 2,1-aminomutase (hemL) (Archaeoglobus fulgidus (strain ATCC 49558 / DSM 4304 / JCM 9628 / NBRC 100126 / VC-16)).